We begin with the raw amino-acid sequence, 863 residues long: Protein translocase subunit SecA (863 aa).

Residues Gln-88, 106–110 (GEGKT), and Asp-507 each bind ATP. A disordered region spans residues 806-863 (KSHEQNEQFLSNTTESGVNENGEAQITKVPRNSPCPCGSGKKYKECHGKSGPKKGILA). Residues 812 to 829 (EQFLSNTTESGVNENGEA) are compositionally biased toward polar residues. Cys-840, Cys-842, Cys-851, and His-852 together coordinate Zn(2+).

Belongs to the SecA family. In terms of assembly, monomer and homodimer. Part of the essential Sec protein translocation apparatus which comprises SecA, SecYEG and auxiliary proteins SecDF-YajC and YidC. The cofactor is Zn(2+).

Its subcellular location is the cell inner membrane. The protein localises to the cytoplasm. It carries out the reaction ATP + H2O + cellular proteinSide 1 = ADP + phosphate + cellular proteinSide 2.. In terms of biological role, part of the Sec protein translocase complex. Interacts with the SecYEG preprotein conducting channel. Has a central role in coupling the hydrolysis of ATP to the transfer of proteins into and across the cell membrane, serving as an ATP-driven molecular motor driving the stepwise translocation of polypeptide chains across the membrane. The protein is Protein translocase subunit SecA of Campylobacter lari (strain RM2100 / D67 / ATCC BAA-1060).